The following is a 763-amino-acid chain: 5-methyltetrahydropteroyltriglutamate--homocysteine methyltransferase (763 aa).

5-methyltetrahydropteroyltri-L-glutamate is bound by residues 16–19 and lysine 117; that span reads RELK. Residues 440-442 and glutamate 493 contribute to the L-homocysteine site; that span reads IGS. Residues 440–442 and glutamate 493 contribute to the L-methionine site; that span reads IGS. 5-methyltetrahydropteroyltri-L-glutamate is bound by residues 524-525 and tryptophan 570; that span reads RC. Residue aspartate 608 coordinates L-homocysteine. Aspartate 608 provides a ligand contact to L-methionine. Residue glutamate 614 participates in 5-methyltetrahydropteroyltri-L-glutamate binding. Zn(2+) contacts are provided by histidine 650, cysteine 652, and glutamate 674. Histidine 703 functions as the Proton donor in the catalytic mechanism. Zn(2+) is bound at residue cysteine 735.

This sequence belongs to the vitamin-B12 independent methionine synthase family. Requires Zn(2+) as cofactor.

It catalyses the reaction 5-methyltetrahydropteroyltri-L-glutamate + L-homocysteine = tetrahydropteroyltri-L-glutamate + L-methionine. The protein operates within amino-acid biosynthesis; L-methionine biosynthesis via de novo pathway; L-methionine from L-homocysteine (MetE route): step 1/1. Its function is as follows. Catalyzes the transfer of a methyl group from 5-methyltetrahydrofolate to homocysteine resulting in methionine formation. In Alcanivorax borkumensis (strain ATCC 700651 / DSM 11573 / NCIMB 13689 / SK2), this protein is 5-methyltetrahydropteroyltriglutamate--homocysteine methyltransferase.